Here is a 185-residue protein sequence, read N- to C-terminus: Large ribosomal subunit protein uL18 (185 aa).

It belongs to the universal ribosomal protein uL18 family. In terms of assembly, part of the 50S ribosomal subunit. Contacts the 5S and 23S rRNAs.

This is one of the proteins that bind and probably mediate the attachment of the 5S RNA into the large ribosomal subunit, where it forms part of the central protuberance. The sequence is that of Large ribosomal subunit protein uL18 from Halorubrum lacusprofundi (strain ATCC 49239 / DSM 5036 / JCM 8891 / ACAM 34).